A 113-amino-acid chain; its full sequence is MHEMSLCEGIRGIVEDQARRHGFAAVKVLRLEIGRFAGVEKAALGFAFDVVMRGSAAEGARLEILDLPGRALCYDCGEEAVIEDRFDPCPLCGGGRLMPVGGDEMRIKDMEVQ.

H2 serves as a coordination point for Ni(2+). Zn(2+)-binding residues include C73, C76, C89, and C92.

It belongs to the HypA/HybF family.

Functionally, involved in the maturation of [NiFe] hydrogenases. Required for nickel insertion into the metal center of the hydrogenase. The protein is Hydrogenase maturation factor HypA of Cereibacter sphaeroides (strain KD131 / KCTC 12085) (Rhodobacter sphaeroides).